The chain runs to 327 residues: Ankyrin repeat domain-containing protein SOWAHD (327 aa).

Positions 1 to 31 are disordered; sequence MAQALEDGNPLPKASNRPAESEAPSDPQIKD. ANK repeat units lie at residues 112-141, 147-162, and 186-216; these read CLEPREHAWILAAAECRFEVLLEMLEAEPS, DPITGYSVLHWLAKHG, and PGSGGLTPLHLAALQGHDMVIKVLVGALGAD. Residues 251–311 are disordered; the sequence is ERDRKRENAN…EKKASSTQEG (61 aa). The segment covering 260–275 has biased composition (low complexity); sequence NNNSSRTTTTTTTTSR. Residues 292-305 show a composition bias toward basic and acidic residues; that stretch reads HYKEASQPVKEKKA.

It belongs to the SOWAH family.

The protein is Ankyrin repeat domain-containing protein SOWAHD (Sowahd) of Mus musculus (Mouse).